We begin with the raw amino-acid sequence, 151 residues long: 3-hydroxyacyl-[acyl-carrier-protein] dehydratase FabZ (151 aa).

His56 is a catalytic residue.

It belongs to the thioester dehydratase family. FabZ subfamily.

The protein resides in the cytoplasm. It carries out the reaction a (3R)-hydroxyacyl-[ACP] = a (2E)-enoyl-[ACP] + H2O. Its function is as follows. Involved in unsaturated fatty acids biosynthesis. Catalyzes the dehydration of short chain beta-hydroxyacyl-ACPs and long chain saturated and unsaturated beta-hydroxyacyl-ACPs. The sequence is that of 3-hydroxyacyl-[acyl-carrier-protein] dehydratase FabZ from Nitrobacter hamburgensis (strain DSM 10229 / NCIMB 13809 / X14).